Here is a 551-residue protein sequence, read N- to C-terminus: Formate--tetrahydrofolate ligase (551 aa).

54 to 61 (TPPGEGKT) lines the ATP pocket.

It belongs to the formate--tetrahydrofolate ligase family.

The enzyme catalyses (6S)-5,6,7,8-tetrahydrofolate + formate + ATP = (6R)-10-formyltetrahydrofolate + ADP + phosphate. The protein operates within one-carbon metabolism; tetrahydrofolate interconversion. The protein is Formate--tetrahydrofolate ligase of Myxococcus xanthus (strain DK1622).